The chain runs to 296 residues: Light-independent protochlorophyllide reductase iron-sulfur ATP-binding protein (296 aa).

ATP is bound by residues 39–44 (GIGKST) and K68. A Mg(2+)-binding site is contributed by S43. The [4Fe-4S] cluster site is built by C124 and C158. 209-210 (NR) lines the ATP pocket.

The protein belongs to the NifH/BchL/ChlL family. As to quaternary structure, homodimer. Protochlorophyllide reductase is composed of three subunits; ChlL, ChlN and ChlB. It depends on [4Fe-4S] cluster as a cofactor.

It catalyses the reaction chlorophyllide a + oxidized 2[4Fe-4S]-[ferredoxin] + 2 ADP + 2 phosphate = protochlorophyllide a + reduced 2[4Fe-4S]-[ferredoxin] + 2 ATP + 2 H2O. It participates in porphyrin-containing compound metabolism; chlorophyll biosynthesis (light-independent). Functionally, component of the dark-operative protochlorophyllide reductase (DPOR) that uses Mg-ATP and reduced ferredoxin to reduce ring D of protochlorophyllide (Pchlide) to form chlorophyllide a (Chlide). This reaction is light-independent. The L component serves as a unique electron donor to the NB-component of the complex, and binds Mg-ATP. This chain is Light-independent protochlorophyllide reductase iron-sulfur ATP-binding protein, found in Prochlorococcus marinus (strain SARG / CCMP1375 / SS120).